A 263-amino-acid chain; its full sequence is Endonuclease 8 (263 aa).

Pro-2 functions as the Schiff-base intermediate with DNA in the catalytic mechanism. Residue Glu-3 is the Proton donor of the active site. The Proton donor; for beta-elimination activity role is filled by Lys-53. Residues Gln-70, Arg-125, and Asn-169 each contribute to the DNA site. The FPG-type zinc finger occupies 229–263 (KVFHRDGERCERCGGVIEKTTLSSRPFYWCPGCQH). Arg-253 (proton donor; for delta-elimination activity) is an active-site residue.

It belongs to the FPG family. Zn(2+) is required as a cofactor.

The catalysed reaction is 2'-deoxyribonucleotide-(2'-deoxyribose 5'-phosphate)-2'-deoxyribonucleotide-DNA = a 3'-end 2'-deoxyribonucleotide-(2,3-dehydro-2,3-deoxyribose 5'-phosphate)-DNA + a 5'-end 5'-phospho-2'-deoxyribonucleoside-DNA + H(+). Functionally, involved in base excision repair of DNA damaged by oxidation or by mutagenic agents. Acts as a DNA glycosylase that recognizes and removes damaged bases. Has a preference for oxidized pyrimidines, such as thymine glycol, 5,6-dihydrouracil and 5,6-dihydrothymine. Has AP (apurinic/apyrimidinic) lyase activity and introduces nicks in the DNA strand. Cleaves the DNA backbone by beta-delta elimination to generate a single-strand break at the site of the removed base with both 3'- and 5'-phosphates. In Klebsiella pneumoniae (strain 342), this protein is Endonuclease 8.